Consider the following 734-residue polypeptide: Photosystem I P700 chlorophyll a apoprotein A2 (734 aa).

Transmembrane regions (helical) follow at residues 46-69 (IFAS…FHVA), 135-158 (LYTG…LHLQ), 175-199 (LNHH…HVAI), 273-291 (MAHH…GHMY), 330-353 (LHFQ…QHMY), 369-395 (AALY…IFFI), 417-439 (AIIS…LYVH), and 517-535 (FLVH…LILV). Residues C559 and C568 each coordinate [4Fe-4S] cluster. Transmembrane regions (helical) follow at residues 575-596 (AFYL…YWHW) and 643-665 (LSVW…MFLI). Chlorophyll a-binding residues include H654, M662, and Y670. W671 contributes to the phylloquinone binding site. Residues 707 to 727 (LVGLAHFSVGYIFTYAAFLIA) traverse the membrane as a helical segment.

The protein belongs to the PsaA/PsaB family. In terms of assembly, the PsaA/B heterodimer binds the P700 chlorophyll special pair and subsequent electron acceptors. PSI consists of a core antenna complex that captures photons, and an electron transfer chain that converts photonic excitation into a charge separation. The eukaryotic PSI reaction center is composed of at least 11 subunits. It depends on P700 is a chlorophyll a/chlorophyll a' dimer, A0 is one or more chlorophyll a, A1 is one or both phylloquinones and FX is a shared 4Fe-4S iron-sulfur center. as a cofactor.

The protein resides in the plastid. Its subcellular location is the chloroplast thylakoid membrane. It carries out the reaction reduced [plastocyanin] + hnu + oxidized [2Fe-2S]-[ferredoxin] = oxidized [plastocyanin] + reduced [2Fe-2S]-[ferredoxin]. PsaA and PsaB bind P700, the primary electron donor of photosystem I (PSI), as well as the electron acceptors A0, A1 and FX. PSI is a plastocyanin-ferredoxin oxidoreductase, converting photonic excitation into a charge separation, which transfers an electron from the donor P700 chlorophyll pair to the spectroscopically characterized acceptors A0, A1, FX, FA and FB in turn. Oxidized P700 is reduced on the lumenal side of the thylakoid membrane by plastocyanin. The sequence is that of Photosystem I P700 chlorophyll a apoprotein A2 from Cucumis sativus (Cucumber).